The chain runs to 286 residues: MQHISVKAFAKINLGLLITGKRQDGYHTLETVFSPINWYDELTFSAADGLGMSCSTIDLPADDSNLCLKAAKALREYAGIDKGVAITLTKRIPFGAGLGGGSSDAATTLRVLNALWELDVPQGDLHGIATGLGADVPYFLETKGLAYATGIGEILEDLEASLPFHIVTVFPGEHISTVWAYRNFYPRFVRQAPDLKQMMKDLCLRSDFSVLPALENDFEPAVFDHYPAVRKVKEQLLEKGGFYASLSGSGSAVFGLFEELRDAENAARFFREHFPVALTEPFFTMQ.

Residue lysine 11 is part of the active site. 93–103 contacts ATP; that stretch reads PFGAGLGGGSS. Aspartate 135 is an active-site residue.

It belongs to the GHMP kinase family. IspE subfamily.

The enzyme catalyses 4-CDP-2-C-methyl-D-erythritol + ATP = 4-CDP-2-C-methyl-D-erythritol 2-phosphate + ADP + H(+). The protein operates within isoprenoid biosynthesis; isopentenyl diphosphate biosynthesis via DXP pathway; isopentenyl diphosphate from 1-deoxy-D-xylulose 5-phosphate: step 3/6. Its function is as follows. Catalyzes the phosphorylation of the position 2 hydroxy group of 4-diphosphocytidyl-2C-methyl-D-erythritol. This Chlorobium phaeobacteroides (strain BS1) protein is 4-diphosphocytidyl-2-C-methyl-D-erythritol kinase.